Reading from the N-terminus, the 130-residue chain is Albumin-1 F (130 aa).

The first 26 residues, 1–26 (MASVKLASLIVLFATLGMFLTKNVGA), serve as a signal peptide directing secretion. Intrachain disulfides connect C29/C46, C33/C48, and C41/C58. Propeptides lie at residues 64-69 (VFLRTN) and 123-130 (LLKSVSTA).

The C-terminal glycine may be removed from PA1b.

Functionally, PA1b binds to basic 7S globulin (BG) and stimulates its phosphorylation activity. Involved in the signal transduction system to regulate the growth and differentiation as a hormone peptide. Toxic to various insects through binding to a high affinity binding site in the insect gut. The polypeptide is Albumin-1 F (Pisum sativum (Garden pea)).